The following is a 66-amino-acid chain: Stress-induced protein KIN2 (66 aa).

Over residues 1–10 (MSETNKNAFQ) the composition is skewed to polar residues. Positions 1-20 (MSETNKNAFQAGQAAGKAEE) are disordered. Repeats lie at residues 31 to 35 (DAAAA) and 49 to 53 (DAAVG).

In terms of assembly, interacts with DEK3. As to expression, expressed at high levels in embryos and mature seeds.

This is Stress-induced protein KIN2 from Arabidopsis thaliana (Mouse-ear cress).